The following is a 1097-amino-acid chain: Chitin synthase 2 (1097 aa).

The segment at 1–46 is disordered; the sequence is MAGYGHSTAGGFGSGSGSGPPGPQYMLPQYDEGDDPDADATPAGQG. Over 1–748 the chain is Extracellular; the sequence is MAGYGHSTAG…HVEFLYHLLQ (748 aa). Positions 8 to 19 are enriched in gly residues; it reads TAGGFGSGSGSG. An N-linked (GlcNAc...) asparagine glycan is attached at N55. 2 disordered regions span residues 148 to 217 and 259 to 322; these read SGHG…YPRY and SSQI…RPPQ. Positions 284–296 are enriched in polar residues; it reads STTYSSNTGTSAS. Over residues 299–313 the composition is skewed to basic and acidic residues; the sequence is DKFEHYGPIPEEGKH. 2 N-linked (GlcNAc...) asparagine glycosylation sites follow: N416 and N424. Residues 749-769 form a helical membrane-spanning segment; it reads LLFTYFSLANFYLAFYFIAGG. At 770 to 786 the chain is on the cytoplasmic side; the sequence is LADPHVDPFNSDGHVAR. Residues 787–807 traverse the membrane as a helical segment; it reads IIFNILRYVCVLLICTQFILS. The Extracellular portion of the chain corresponds to 808 to 821; sequence LGNRPQGAKRMYLA. The helical transmembrane segment at 822–842 threads the bilayer; sequence SMIIYAVIMVYTTFATIFIVV. The Cytoplasmic segment spans residues 843-865; that stretch reads RQIQPSQKSDDKPDLELGNNVFT. A helical membrane pass occupies residues 866 to 886; it reads NLIVSVASTLGLYFVMSFLYL. Topologically, residues 887-894 are extracellular; the sequence is DPWHMFTS. Residues 895–915 traverse the membrane as a helical segment; the sequence is AIQYFVLLPSYICTLQIYAFC. Topologically, residues 916 to 993 are cytoplasmic; it reads NTHDVTWGTK…QDYYKSVRTY (78 aa). Residues 994-1014 form a helical membrane-spanning segment; it reads MVVSWMVANATLAMAVSEAYG. The Extracellular segment spans residues 1015–1025; it reads DSEIGDNFYLR. The chain crosses the membrane as a helical span at residues 1026-1046; it reads FILWAVAALALFRALGSTTFA. At 1047-1097 the chain is on the cytoplasmic side; it reads AINLVSALVEGRVRLRLNMKGFRWIKEKWGDADVKGKFEGLGDRARGLARR.

The protein belongs to the chitin synthase family.

The protein resides in the cell membrane. It catalyses the reaction [(1-&gt;4)-N-acetyl-beta-D-glucosaminyl](n) + UDP-N-acetyl-alpha-D-glucosamine = [(1-&gt;4)-N-acetyl-beta-D-glucosaminyl](n+1) + UDP + H(+). Functionally, polymerizes chitin, a structural polymer of the cell wall and septum, by transferring the sugar moiety of UDP-GlcNAc to the non-reducing end of the growing chitin polymer. This chain is Chitin synthase 2 (chs-2), found in Neurospora crassa (strain ATCC 24698 / 74-OR23-1A / CBS 708.71 / DSM 1257 / FGSC 987).